We begin with the raw amino-acid sequence, 584 residues long: Alkaline nuclease (584 aa).

The tract at residues 409–429 (GGGADHHLRGSPGDSPPPIPF) is disordered.

This sequence belongs to the herpesviridae alkaline nuclease family. As to quaternary structure, interacts with major DNA-binding protein; this interaction increases the nuclease processivity of the alkaline exonuclease.

It localises to the host nucleus. The protein resides in the host cytoplasm. In terms of biological role, plays a role in processing non linear or branched viral DNA intermediates in order to promote the production of mature packaged unit-length linear progeny viral DNA molecules. Exhibits endonuclease and exonuclease activities and accepts both double-stranded and single-stranded DNA as substrate. Exonuclease digestion of DNA is in the 5'-&gt; 3' direction and the products are 5'-monophosphate nucleosides. Additionally, forms a recombinase with the major DNA-binding protein, which displays strand exchange activity. In Homo sapiens (Human), this protein is Alkaline nuclease (UL98).